Here is a 505-residue protein sequence, read N- to C-terminus: Lysine--tRNA ligase (505 aa).

Residues glutamate 415 and glutamate 422 each coordinate Mg(2+).

It belongs to the class-II aminoacyl-tRNA synthetase family. In terms of assembly, homodimer. Requires Mg(2+) as cofactor.

It is found in the cytoplasm. It carries out the reaction tRNA(Lys) + L-lysine + ATP = L-lysyl-tRNA(Lys) + AMP + diphosphate. In Yersinia pseudotuberculosis serotype O:1b (strain IP 31758), this protein is Lysine--tRNA ligase.